The following is a 249-amino-acid chain: tRNA (guanine-N(1)-)-methyltransferase (249 aa).

S-adenosyl-L-methionine is bound by residues G113 and 133–138 (VGDYVL).

It belongs to the RNA methyltransferase TrmD family. In terms of assembly, homodimer.

The protein resides in the cytoplasm. It catalyses the reaction guanosine(37) in tRNA + S-adenosyl-L-methionine = N(1)-methylguanosine(37) in tRNA + S-adenosyl-L-homocysteine + H(+). Its function is as follows. Specifically methylates guanosine-37 in various tRNAs. This chain is tRNA (guanine-N(1)-)-methyltransferase, found in Tolumonas auensis (strain DSM 9187 / NBRC 110442 / TA 4).